A 161-amino-acid chain; its full sequence is SsrA-binding protein (161 aa).

It belongs to the SmpB family.

The protein localises to the cytoplasm. Its function is as follows. Required for rescue of stalled ribosomes mediated by trans-translation. Binds to transfer-messenger RNA (tmRNA), required for stable association of tmRNA with ribosomes. tmRNA and SmpB together mimic tRNA shape, replacing the anticodon stem-loop with SmpB. tmRNA is encoded by the ssrA gene; the 2 termini fold to resemble tRNA(Ala) and it encodes a 'tag peptide', a short internal open reading frame. During trans-translation Ala-aminoacylated tmRNA acts like a tRNA, entering the A-site of stalled ribosomes, displacing the stalled mRNA. The ribosome then switches to translate the ORF on the tmRNA; the nascent peptide is terminated with the 'tag peptide' encoded by the tmRNA and targeted for degradation. The ribosome is freed to recommence translation, which seems to be the essential function of trans-translation. The polypeptide is SsrA-binding protein (Mycolicibacterium smegmatis (strain ATCC 700084 / mc(2)155) (Mycobacterium smegmatis)).